The sequence spans 192 residues: Peptidyl-tRNA hydrolase (192 aa).

H17 provides a ligand contact to tRNA. Catalysis depends on H22, which acts as the Proton acceptor. TRNA is bound by residues F68, N70, and N116.

Belongs to the PTH family. In terms of assembly, monomer.

It localises to the cytoplasm. It carries out the reaction an N-acyl-L-alpha-aminoacyl-tRNA + H2O = an N-acyl-L-amino acid + a tRNA + H(+). Functionally, hydrolyzes ribosome-free peptidyl-tRNAs (with 1 or more amino acids incorporated), which drop off the ribosome during protein synthesis, or as a result of ribosome stalling. Catalyzes the release of premature peptidyl moieties from peptidyl-tRNA molecules trapped in stalled 50S ribosomal subunits, and thus maintains levels of free tRNAs and 50S ribosomes. The chain is Peptidyl-tRNA hydrolase from Xylella fastidiosa (strain 9a5c).